Reading from the N-terminus, the 497-residue chain is Glycerol kinase (497 aa).

Residue T12 participates in ADP binding. ATP-binding residues include T12, T13, and S14. T12 lines the sn-glycerol 3-phosphate pocket. An ADP-binding site is contributed by R16. Sn-glycerol 3-phosphate-binding residues include R82, E83, Y134, and D243. Glycerol is bound by residues R82, E83, Y134, D243, and Q244. ADP-binding residues include T265 and G308. 4 residues coordinate ATP: T265, G308, Q312, and G409. ADP contacts are provided by G409 and N413.

Belongs to the FGGY kinase family.

The catalysed reaction is glycerol + ATP = sn-glycerol 3-phosphate + ADP + H(+). Its pathway is polyol metabolism; glycerol degradation via glycerol kinase pathway; sn-glycerol 3-phosphate from glycerol: step 1/1. With respect to regulation, inhibited by fructose 1,6-bisphosphate (FBP). Key enzyme in the regulation of glycerol uptake and metabolism. Catalyzes the phosphorylation of glycerol to yield sn-glycerol 3-phosphate. In Nitratidesulfovibrio vulgaris (strain DSM 19637 / Miyazaki F) (Desulfovibrio vulgaris), this protein is Glycerol kinase.